The primary structure comprises 92 residues: Small ribosomal subunit protein uS19 (92 aa).

The protein belongs to the universal ribosomal protein uS19 family.

Functionally, protein S19 forms a complex with S13 that binds strongly to the 16S ribosomal RNA. The chain is Small ribosomal subunit protein uS19 from Cellvibrio japonicus (strain Ueda107) (Pseudomonas fluorescens subsp. cellulosa).